Here is a 447-residue protein sequence, read N- to C-terminus: Serine/threonine-protein phosphatase 2A 55 kDa regulatory subunit B alpha isoform (447 aa).

Position 2 is an N-acetylalanine (Ala-2). WD repeat units follow at residues Gln-11 to His-80, Glu-94 to Asn-174, Ala-175 to Lys-218, Glu-227 to Glu-270, Ile-288 to Val-325, Glu-347 to Ala-381, and Asp-414 to Val-446.

It belongs to the phosphatase 2A regulatory subunit B family. PP2A consists of a common heterodimeric core enzyme, composed of a 36 kDa catalytic subunit (subunit C) and a 65 kDa constant regulatory subunit (PR65 or subunit A), that associates with a variety of regulatory subunits. Proteins that associate with the core dimer include three families of regulatory subunits B (the R2/B/PR55/B55, R3/B''/PR72/PR130/PR59 and R5/B'/B56 families), the 48 kDa variable regulatory subunit, viral proteins, and cell signaling molecules. Interacts with the PP2A C catalytic subunit PPP2CA. Interacts with the PP2A A subunit PPP2R1A. Interacts with TP53. Interacts with IER5. Interacts with MFHAS1; the interaction is direct. Interacts with PABIR1/FAM122A (via its N-terminus); the interaction is direct and inhibits PP2A activity. Interacts with ARPP19; the interaction is direct and inhibits PP2A activity. Interacts with CRTC3. As to expression, expressed in all tissues examined.

Substrate-recognition subunit of protein phosphatase 2A (PP2A) that plays a key role in cell cycle by controlling mitosis entry and exit. Involved in chromosome clustering during late mitosis by mediating dephosphorylation of MKI67. Essential for serine/threonine-protein phosphatase 2A-mediated dephosphorylation of WEE1, preventing its ubiquitin-mediated proteolysis, increasing WEE1 protein levels, and promoting the G2/M checkpoint. This chain is Serine/threonine-protein phosphatase 2A 55 kDa regulatory subunit B alpha isoform (PPP2R2A), found in Homo sapiens (Human).